Consider the following 847-residue polypeptide: MLRNSNKLIKSVIKNESTLLKCKNNNQRVVNYSSSSTSITSGNGIYSQIKKIEEFVSKKPSVTKVSSSSATINFNTSKSGSTNTTAVDYSKSVKIKDQKQIVLVKIGGGVIESDISSLIGSLNFLKKIGLFPIVVHGGGPQLNAELAAAGEPAEYVEGLRVTPPSVLAIAQRVFLRENLKIVEALESSGTKARPVTQGVYQATPLDPKLYGFVGNVTKIHTDALASCITNDYVPVISSLAMTPEGQVLNINADVAALELAKSINPLKILFINTTAGMKDGDGKVMQHIKLDEQYADLMKQPWVKHGTKLKLKEFKSCLDVLPPSTSITITSPDLLMKELFAKDGSGTTVERGEVMHSHESPSFDETKFFALIEKSTGTKGGRIDYQQLKTDLSKGVVKAFVNSHYTAGILVRPLSSGSSVSYVDQFFFFNNSIQSTEDSESVFKKMFENSSYIWKESSNNQLNNEWFKKIATGFITGATNNIFWTNIDTNKIENSIKECLSQSSTYLSGITKAASSKSASEKLLQDKNHKFRVGLIGARGFTGGNLVRLIDGHPNLELAIASSSTNFGKPITTEFPQLKSNLKFDNVKPENIDIFTRDHGIDGWFMALPDKISSPYIQTLENSSESPVLVDLSSDHRFNEKWTYGQPETNRAAIKESKLIANPGCYATGMFLTLKPFVNDLVTPPSCFGISGYSGAGSKPSEKNDPTRLSDNILPYKLVQHTHELEVSHQLGSPIYFMPHVGQFFQGITLTISMELKYPMTKEQVVERYQKFYQNEPLIKIDKDGIPEVKSNSGKHTVTIGGFAVNGNHLVVVTTLDNLLKGAATQALQNMNICLGLDELASIKNEL.

The acetylglutamate kinase stretch occupies residues Q100–S331. The N-acetyltransferase domain maps to G352 to S508. The interval F531 to E846 is N-acetyl-gamma-glutamyl-phosphate reductase. C665 is a catalytic residue.

The protein in the N-terminal section; belongs to the acetylglutamate kinase family. It in the C-terminal section; belongs to the NAGSA dehydrogenase family.

The protein localises to the mitochondrion. It catalyses the reaction N-acetyl-L-glutamate 5-semialdehyde + phosphate + NADP(+) = N-acetyl-L-glutamyl 5-phosphate + NADPH + H(+). The catalysed reaction is N-acetyl-L-glutamate + ATP = N-acetyl-L-glutamyl 5-phosphate + ADP. It participates in amino-acid biosynthesis; L-arginine biosynthesis; N(2)-acetyl-L-ornithine from L-glutamate: step 2/4. The protein operates within amino-acid biosynthesis; L-arginine biosynthesis; N(2)-acetyl-L-ornithine from L-glutamate: step 3/4. This is Bifunctional protein argC, mitochondrial (argC) from Dictyostelium discoideum (Social amoeba).